A 176-amino-acid polypeptide reads, in one-letter code: Inorganic pyrophosphatase (176 aa).

Positions 30, 44, and 56 each coordinate substrate. Mg(2+)-binding residues include Asp-66, Asp-71, and Asp-103. Tyr-142 is a substrate binding site.

Belongs to the PPase family. As to quaternary structure, homohexamer. Requires Mg(2+) as cofactor.

The protein localises to the cytoplasm. It carries out the reaction diphosphate + H2O = 2 phosphate + H(+). Its function is as follows. Catalyzes the hydrolysis of inorganic pyrophosphate (PPi) forming two phosphate ions. This Brucella melitensis biotype 1 (strain ATCC 23456 / CCUG 17765 / NCTC 10094 / 16M) protein is Inorganic pyrophosphatase.